A 120-amino-acid chain; its full sequence is Large ribosomal subunit protein bL19c (120 aa).

Belongs to the bacterial ribosomal protein bL19 family.

It is found in the plastid. It localises to the chloroplast. The polypeptide is Large ribosomal subunit protein bL19c (Thalassiosira pseudonana (Marine diatom)).